A 174-amino-acid polypeptide reads, in one-letter code: MAPQQKGKQGTKGAKQIVEENKTTLTFYRNMAIGCAAPALLLSFLVFEVTKTSVFMHILSLLILGSSYQFMAFMSQAKYSESGALLDSGNDLNMEGGIAENVKDLIILTSGTLLLALISNYFWLVLLLAPIRAGWMLWGSVIQPWLSQRNAQDDNPQVDEKKQKKMDRRMRRMR.

Transmembrane regions (helical) follow at residues 30–50 (NMAI…FEVT), 54–74 (VFMH…MAFM), and 111–131 (GTLL…LAPI). Positions 151-174 (AQDDNPQVDEKKQKKMDRRMRRMR) are disordered. Over residues 163 to 174 (QKKMDRRMRRMR) the composition is skewed to basic residues.

This sequence belongs to the TMEM208 family. In terms of assembly, interacts with fz. Expressed in the brain.

The protein localises to the endoplasmic reticulum membrane. In terms of biological role, may play an important role during development and helps to maintain proper levels of Fz. This chain is Transmembrane protein 208, found in Drosophila melanogaster (Fruit fly).